The following is a 264-amino-acid chain: 3-methyl-2-oxobutanoate hydroxymethyltransferase (264 aa).

Residues aspartate 45 and aspartate 84 each coordinate Mg(2+). Residues 45-46, aspartate 84, and lysine 112 contribute to the 3-methyl-2-oxobutanoate site; that span reads DS. Glutamate 114 serves as a coordination point for Mg(2+). Glutamate 181 serves as the catalytic Proton acceptor.

It belongs to the PanB family. In terms of assembly, homodecamer; pentamer of dimers. Mg(2+) is required as a cofactor.

It is found in the cytoplasm. The catalysed reaction is 3-methyl-2-oxobutanoate + (6R)-5,10-methylene-5,6,7,8-tetrahydrofolate + H2O = 2-dehydropantoate + (6S)-5,6,7,8-tetrahydrofolate. Its pathway is cofactor biosynthesis; (R)-pantothenate biosynthesis; (R)-pantoate from 3-methyl-2-oxobutanoate: step 1/2. In terms of biological role, catalyzes the reversible reaction in which hydroxymethyl group from 5,10-methylenetetrahydrofolate is transferred onto alpha-ketoisovalerate to form ketopantoate. The sequence is that of 3-methyl-2-oxobutanoate hydroxymethyltransferase from Shewanella frigidimarina (strain NCIMB 400).